A 229-amino-acid polypeptide reads, in one-letter code: Enolase-phosphatase E1 (229 aa).

The segment at 206–229 is disordered; sequence DRDPASHHPQVQRFDDIHPEQIPA. The segment covering 218–229 has biased composition (basic and acidic residues); it reads RFDDIHPEQIPA.

It belongs to the HAD-like hydrolase superfamily. MasA/MtnC family. Monomer. Mg(2+) serves as cofactor.

It catalyses the reaction 5-methylsulfanyl-2,3-dioxopentyl phosphate + H2O = 1,2-dihydroxy-5-(methylsulfanyl)pent-1-en-3-one + phosphate. The protein operates within amino-acid biosynthesis; L-methionine biosynthesis via salvage pathway; L-methionine from S-methyl-5-thio-alpha-D-ribose 1-phosphate: step 3/6. It participates in amino-acid biosynthesis; L-methionine biosynthesis via salvage pathway; L-methionine from S-methyl-5-thio-alpha-D-ribose 1-phosphate: step 4/6. In terms of biological role, bifunctional enzyme that catalyzes the enolization of 2,3-diketo-5-methylthiopentyl-1-phosphate (DK-MTP-1-P) into the intermediate 2-hydroxy-3-keto-5-methylthiopentenyl-1-phosphate (HK-MTPenyl-1-P), which is then dephosphorylated to form the acireductone 1,2-dihydroxy-3-keto-5-methylthiopentene (DHK-MTPene). This is Enolase-phosphatase E1 from Klebsiella oxytoca.